Reading from the N-terminus, the 1038-residue chain is P3N-PIPO polyprotein (1038 aa).

Positions 170-313 constitute a Peptidase S30 domain; it reads LVAKSDFDDL…AGDVGRTMHY (144 aa). Catalysis depends on for P1 proteinase activity residues histidine 224, glutamate 233, and serine 266. The short motif at 365–368 is the Involved in interaction with stylet and aphid transmission element; it reads KMAC. Residues 622-624 carry the Involved in virions binding and aphid transmission motif; the sequence is PTK. The Peptidase C6 domain maps to 648-770; that stretch reads MYIAKEGYCY…EGEMKWYRVG (123 aa). Catalysis depends on for helper component proteinase activity residues cysteine 656 and histidine 729.

Belongs to the potyviridae P3N-PIPO polyprotein family. As to quaternary structure, interacts (via PIPO domain) with host PCaP1 protein; this interaction may help to anchor the movement complex to the plasma membrane from which the complex could move to the plasmodesmata. In terms of processing, potyviral RNA is expressed as two polyproteins which undergo post-translational proteolytic processing. Genome polyprotein is processed by NIa-pro, P1 and HC-pro proteinases resulting in the production of at least ten individual proteins. P3N-PIPO is cleaved by P1 and HC-pro proteinases resulting in the production of three individual proteins. The P1 proteinase and the HC-pro cleave only their respective C-termini autocatalytically.

Its subcellular location is the host cell junction. It localises to the host plasmodesma. The catalysed reaction is Hydrolyzes a Gly-|-Gly bond at its own C-terminus, commonly in the sequence -Tyr-Xaa-Val-Gly-|-Gly, in the processing of the potyviral polyprotein.. Its function is as follows. Required for aphid transmission and also has proteolytic activity. Only cleaves a Gly-Gly dipeptide at its own C-terminus. Interacts with virions and aphid stylets. Acts as a suppressor of RNA-mediated gene silencing, also known as post-transcriptional gene silencing (PTGS), a mechanism of plant viral defense that limits the accumulation of viral RNAs. May have RNA-binding activity. In terms of biological role, allows efficient cell to cell propagation, by bypassing the host cell wall barrier. Transports viral genome to neighboring plant cells directly through plasmosdesmata, without any budding. This chain is P3N-PIPO polyprotein, found in Beet mosaic virus (BtMV).